The sequence spans 424 residues: D-inositol 3-phosphate glycosyltransferase (424 aa).

His-16 serves as a coordination point for 1D-myo-inositol 3-phosphate. UDP-N-acetyl-alpha-D-glucosamine-binding positions include 22-23 (QP) and Gly-30. 1D-myo-inositol 3-phosphate is bound by residues 27 to 32 (DAGGMN), Lys-85, Tyr-118, Thr-142, and Arg-162. Arg-240 and Lys-245 together coordinate UDP-N-acetyl-alpha-D-glucosamine. Residues Met-313, Arg-314, and Ala-316 each coordinate Mg(2+). UDP-N-acetyl-alpha-D-glucosamine contacts are provided by Glu-326 and Glu-334. Thr-340 contacts Mg(2+).

It belongs to the glycosyltransferase group 1 family. MshA subfamily. In terms of assembly, homodimer.

It catalyses the reaction 1D-myo-inositol 3-phosphate + UDP-N-acetyl-alpha-D-glucosamine = 1D-myo-inositol 2-acetamido-2-deoxy-alpha-D-glucopyranoside 3-phosphate + UDP + H(+). Its function is as follows. Catalyzes the transfer of a N-acetyl-glucosamine moiety to 1D-myo-inositol 3-phosphate to produce 1D-myo-inositol 2-acetamido-2-deoxy-glucopyranoside 3-phosphate in the mycothiol biosynthesis pathway. The sequence is that of D-inositol 3-phosphate glycosyltransferase from Jonesia denitrificans (strain ATCC 14870 / DSM 20603 / BCRC 15368 / CIP 55.134 / JCM 11481 / NBRC 15587 / NCTC 10816 / Prevot 55134) (Listeria denitrificans).